The primary structure comprises 64 residues: Large ribosomal subunit protein bL32 (64 aa).

Residues 1 to 16 show a composition bias toward basic residues; it reads MAVPKHRKSKAKKRSR. A disordered region spans residues 1–22; the sequence is MAVPKHRKSKAKKRSRQAANDK.

This sequence belongs to the bacterial ribosomal protein bL32 family.

The polypeptide is Large ribosomal subunit protein bL32 (Brachyspira hyodysenteriae (strain ATCC 49526 / WA1)).